Consider the following 392-residue polypeptide: Heat-inducible transcription repressor HrcA (392 aa).

It belongs to the HrcA family.

Functionally, negative regulator of class I heat shock genes (grpE-dnaK-dnaJ and groELS operons). Prevents heat-shock induction of these operons. This Synechococcus sp. (strain JA-3-3Ab) (Cyanobacteria bacterium Yellowstone A-Prime) protein is Heat-inducible transcription repressor HrcA.